The primary structure comprises 404 residues: Cysteine desulfurase IscS (404 aa).

Residues 75–76, Asn155, Gln183, and 203–205 contribute to the pyridoxal 5'-phosphate site; these read AT and SAH. Residue Lys206 is modified to N6-(pyridoxal phosphate)lysine. A pyridoxal 5'-phosphate-binding site is contributed by Thr243. Residue Cys328 is the Cysteine persulfide intermediate of the active site. Cys328 serves as a coordination point for [2Fe-2S] cluster.

Belongs to the class-V pyridoxal-phosphate-dependent aminotransferase family. NifS/IscS subfamily. In terms of assembly, homodimer. Forms a heterotetramer with IscU, interacts with other sulfur acceptors. It depends on pyridoxal 5'-phosphate as a cofactor.

It localises to the cytoplasm. It carries out the reaction (sulfur carrier)-H + L-cysteine = (sulfur carrier)-SH + L-alanine. The protein operates within cofactor biosynthesis; iron-sulfur cluster biosynthesis. In terms of biological role, master enzyme that delivers sulfur to a number of partners involved in Fe-S cluster assembly, tRNA modification or cofactor biosynthesis. Catalyzes the removal of elemental sulfur atoms from cysteine to produce alanine. Functions as a sulfur delivery protein for Fe-S cluster synthesis onto IscU, an Fe-S scaffold assembly protein, as well as other S acceptor proteins. The protein is Cysteine desulfurase IscS of Tolumonas auensis (strain DSM 9187 / NBRC 110442 / TA 4).